The sequence spans 466 residues: Alpha-1A adrenergic receptor (466 aa).

The Extracellular portion of the chain corresponds to 1-27; the sequence is MVFLSGNASDSSNCTHPPPPVNISKAI. N7, N13, and N22 each carry an N-linked (GlcNAc...) asparagine glycan. A helical transmembrane segment spans residues 28 to 51; sequence LLGVILGGLILFGVLGNILVILSV. The Cytoplasmic portion of the chain corresponds to 52–64; the sequence is ACHRHLHSVTHYY. A helical membrane pass occupies residues 65–88; that stretch reads IVNLAVADLLLTSTVLPFSAIFEI. Over 89 to 99 the chain is Extracellular; sequence LGYWAFGRVFC. C99 and C176 are disulfide-bonded. Residues 100–122 form a helical membrane-spanning segment; that stretch reads NVWAAVDVLCCTASIMGLCIISI. The Cytoplasmic portion of the chain corresponds to 123–143; sequence DRYIGVSYPLRYPTIVTQKRG. A helical transmembrane segment spans residues 144 to 167; the sequence is LMALLCVWALSLVISIGPLFGWRQ. At 168–181 the chain is on the extracellular side; it reads PAPEDETICQINEE. Residues 182–205 form a helical membrane-spanning segment; that stretch reads PGYVLFSALGSFYVPLTIILVMYC. Over 206–273 the chain is Cytoplasmic; the sequence is RVYVVAKRES…FSREKKAAKT (68 aa). S215 is subject to Phosphoserine; by PKA. A helical membrane pass occupies residues 274–297; the sequence is LGIVVGCFVLCWLPFFLVMPIGSF. Residues 298–305 are Extracellular-facing; the sequence is FPDFRPSE. The chain crosses the membrane as a helical span at residues 306 to 329; sequence TVFKIAFWLGYLNSCINPIIYPCS. The Cytoplasmic portion of the chain corresponds to 330–466; sequence SQEFKKAFQN…ISLSENGEEV (137 aa). The Nuclear localization signal signature appears at 334–349; the sequence is KKAFQNVLRIQCLRRK. Residue C345 is the site of S-palmitoyl cysteine attachment.

Belongs to the G-protein coupled receptor 1 family. Adrenergic receptor subfamily. ADRA1A sub-subfamily. Homo- and heterooligomer. Heterooligomerizes with ADRA1B homooligomers in cardiac myocytes. Interacts with CAVIN4.

It is found in the nucleus membrane. It localises to the cell membrane. Its subcellular location is the cytoplasm. The protein localises to the membrane. The protein resides in the caveola. This alpha-adrenergic receptor mediates its action by association with G proteins that activate a phosphatidylinositol-calcium second messenger system. Its effect is mediated by G(q) and G(11) proteins. Nuclear ADRA1A-ADRA1B heterooligomers regulate phenylephrine (PE)-stimulated ERK signaling in cardiac myocytes. In Bos taurus (Bovine), this protein is Alpha-1A adrenergic receptor (ADRA1A).